We begin with the raw amino-acid sequence, 112 residues long: Mediator of RNA polymerase II transcription subunit 22 (112 aa).

Residues 83–112 (KPEDGGEGQLADELLDKIEDTSDGVDKETA) form a disordered region. The span at 96-112 (LLDKIEDTSDGVDKETA) shows a compositional bias: basic and acidic residues.

It belongs to the Mediator complex subunit 22 family. In terms of assembly, component of the Mediator complex.

Its subcellular location is the nucleus. Its function is as follows. Component of the Mediator complex, a coactivator involved in the regulated transcription of nearly all RNA polymerase II-dependent genes. Mediator functions as a bridge to convey information from gene-specific regulatory proteins to the basal RNA polymerase II transcription machinery. Mediator is recruited to promoters by direct interactions with regulatory proteins and serves as a scaffold for the assembly of a functional preinitiation complex with RNA polymerase II and the general transcription factors. The protein is Mediator of RNA polymerase II transcription subunit 22 (SRB6) of Yarrowia lipolytica (strain CLIB 122 / E 150) (Yeast).